A 299-amino-acid polypeptide reads, in one-letter code: tRNA pseudouridine synthase B (299 aa).

Residue Asp-47 is the Nucleophile of the active site.

Belongs to the pseudouridine synthase TruB family. Type 1 subfamily.

The enzyme catalyses uridine(55) in tRNA = pseudouridine(55) in tRNA. Functionally, responsible for synthesis of pseudouridine from uracil-55 in the psi GC loop of transfer RNAs. This is tRNA pseudouridine synthase B from Dechloromonas aromatica (strain RCB).